Reading from the N-terminus, the 249-residue chain is 5'-nucleotidase SurE (249 aa).

Residues Asp-9, Asp-10, Ser-40, and Asn-92 each contribute to the a divalent metal cation site.

Belongs to the SurE nucleotidase family. The cofactor is a divalent metal cation.

It is found in the cytoplasm. The catalysed reaction is a ribonucleoside 5'-phosphate + H2O = a ribonucleoside + phosphate. Nucleotidase that shows phosphatase activity on nucleoside 5'-monophosphates. The polypeptide is 5'-nucleotidase SurE (Shewanella sp. (strain ANA-3)).